The sequence spans 69 residues: Cytochrome b-c1 complex subunit 6-1, mitochondrial (69 aa).

2 cysteine pairs are disulfide-bonded: Cys-17-Cys-59 and Cys-31-Cys-45.

This sequence belongs to the UQCRH/QCR6 family. In terms of assembly, component of the ubiquinol-cytochrome c oxidoreductase (cytochrome b-c1 complex, complex III, CIII), a multisubunit enzyme composed of 10 subunits. The complex is composed of 3 respiratory subunits cytochrome b (MT-CYB), cytochrome c1 (CYC1-1 or CYC1-2) and Rieske protein (UCR1-1 or UCR1-2), 2 core protein subunits MPPalpha1 (or MPPalpha2) and MPPB, and 5 low-molecular weight protein subunits QCR7-1 (or QCR7-2), UCRQ-1 (or UCRQ-2), QCR9, UCRY and probably QCR6-1 (or QCR6-2). The complex exists as an obligatory dimer and forms supercomplexes (SCs) in the inner mitochondrial membrane with NADH-ubiquinone oxidoreductase (complex I, CI), resulting in different assemblies (supercomplexes SCI(1)III(2) and SCI(2)III(4)).

It localises to the mitochondrion inner membrane. In terms of biological role, component of the ubiquinol-cytochrome c oxidoreductase, a multisubunit transmembrane complex that is part of the mitochondrial electron transport chain which drives oxidative phosphorylation. The respiratory chain contains 3 multisubunit complexes succinate dehydrogenase (complex II, CII), ubiquinol-cytochrome c oxidoreductase (cytochrome b-c1 complex, complex III, CIII) and cytochrome c oxidase (complex IV, CIV), that cooperate to transfer electrons derived from NADH and succinate to molecular oxygen, creating an electrochemical gradient over the inner membrane that drives transmembrane transport and the ATP synthase. The cytochrome b-c1 complex catalyzes electron transfer from ubiquinol to cytochrome c, linking this redox reaction to translocation of protons across the mitochondrial inner membrane, with protons being carried across the membrane as hydrogens on the quinol. In the process called Q cycle, 2 protons are consumed from the matrix, 4 protons are released into the intermembrane space and 2 electrons are passed to cytochrome c. The sequence is that of Cytochrome b-c1 complex subunit 6-1, mitochondrial (QCR6-1) from Arabidopsis thaliana (Mouse-ear cress).